The chain runs to 484 residues: Glycogen synthase (484 aa).

Lys-15 contacts ADP-alpha-D-glucose.

This sequence belongs to the glycosyltransferase 1 family. Bacterial/plant glycogen synthase subfamily.

It catalyses the reaction [(1-&gt;4)-alpha-D-glucosyl](n) + ADP-alpha-D-glucose = [(1-&gt;4)-alpha-D-glucosyl](n+1) + ADP + H(+). Its pathway is glycan biosynthesis; glycogen biosynthesis. Synthesizes alpha-1,4-glucan chains using ADP-glucose. This is Glycogen synthase from Bacillus licheniformis (strain ATCC 14580 / DSM 13 / JCM 2505 / CCUG 7422 / NBRC 12200 / NCIMB 9375 / NCTC 10341 / NRRL NRS-1264 / Gibson 46).